The sequence spans 249 residues: Transmembrane protein 106C (249 aa).

The tract at residues 1 to 26 is disordered; the sequence is MGSRHSTYAHRPFSKRRKADDTEDSL. A lipid anchor (N-myristoyl glycine) is attached at Gly2. The next 2 helical transmembrane spans lie at 86 to 106 and 197 to 217; these read YVLL…FFLF and SYVY…VVFV.

The protein belongs to the TMEM106 family. In terms of assembly, interacts with TMEM106B.

It is found in the endoplasmic reticulum membrane. The protein resides in the membrane. The polypeptide is Transmembrane protein 106C (TMEM106C) (Bos taurus (Bovine)).